The sequence spans 341 residues: L-threonine 3-dehydrogenase (341 aa).

A Zn(2+)-binding site is contributed by cysteine 38. Active-site charge relay system residues include threonine 40 and histidine 43. Positions 63, 64, 93, 96, 99, and 107 each coordinate Zn(2+). Residues isoleucine 175, aspartate 195, arginine 200, 262–264 (LGI), and 286–287 (IY) contribute to the NAD(+) site.

Belongs to the zinc-containing alcohol dehydrogenase family. As to quaternary structure, homotetramer. Zn(2+) serves as cofactor.

The protein resides in the cytoplasm. The enzyme catalyses L-threonine + NAD(+) = (2S)-2-amino-3-oxobutanoate + NADH + H(+). The protein operates within amino-acid degradation; L-threonine degradation via oxydo-reductase pathway; glycine from L-threonine: step 1/2. Its function is as follows. Catalyzes the NAD(+)-dependent oxidation of L-threonine to 2-amino-3-ketobutyrate. The sequence is that of L-threonine 3-dehydrogenase from Yersinia pseudotuberculosis serotype O:1b (strain IP 31758).